We begin with the raw amino-acid sequence, 358 residues long: Peptide chain release factor 1 (358 aa).

At glutamine 233 the chain carries N5-methylglutamine.

It belongs to the prokaryotic/mitochondrial release factor family. In terms of processing, methylated by PrmC. Methylation increases the termination efficiency of RF1.

It localises to the cytoplasm. Peptide chain release factor 1 directs the termination of translation in response to the peptide chain termination codons UAG and UAA. The chain is Peptide chain release factor 1 from Lachnoclostridium phytofermentans (strain ATCC 700394 / DSM 18823 / ISDg) (Clostridium phytofermentans).